The primary structure comprises 138 residues: Bis(5'-nucleosyl)-tetraphosphatase [asymmetrical] (138 aa).

Residues 1-132 form the Nudix hydrolase domain; that stretch reads MVVKAAGLVI…EMGSLLRKFS (132 aa). The short motif at 37–58 is the Nudix box element; that stretch reads GHVDPGEDEWQAAIRETKEEAN.

It belongs to the Nudix hydrolase family. In terms of assembly, monomer. Requires Mg(2+) as cofactor. It depends on Co(2+) as a cofactor. Mn(2+) serves as cofactor. Zn(2+) is required as a cofactor. The cofactor is Ca(2+).

The catalysed reaction is P(1),P(4)-bis(5'-adenosyl) tetraphosphate + H2O = AMP + ATP + 2 H(+). Functionally, asymmetrically hydrolyzes Ap4A to yield AMP and ATP. The polypeptide is Bis(5'-nucleosyl)-tetraphosphatase [asymmetrical] (ndx-4) (Caenorhabditis elegans).